The primary structure comprises 615 residues: Zinc metalloproteinase-disintegrin-like (615 aa).

Positions 1–20 (MIQALLVTICLVGFPHQGSS) are cleaved as a signal peptide. A propeptide spanning residues 21 to 195 (IILESGNVKD…KMNFQSANNP (175 aa)) is cleaved from the precursor. One can recognise a Peptidase M12B domain in the interval 204-400 (KYIKLAVVVD…DLPQCILNKP (197 aa)). 3 disulfides stabilise this stretch: cysteine 315–cysteine 395, cysteine 355–cysteine 379, and cysteine 357–cysteine 362. Position 340 (histidine 340) interacts with Zn(2+). Glutamate 341 is an active-site residue. The Zn(2+) site is built by histidine 344 and histidine 350. Positions 408 to 494 (PAVCGNNFVE…DCPMDGLQRN (87 aa)) constitute a Disintegrin domain. Residues valine 410, asparagine 413, phenylalanine 415, glutamate 417, and aspartate 423 each contribute to the Ca(2+) site. 14 disulfide bridges follow: cysteine 411/cysteine 440, cysteine 422/cysteine 435, cysteine 424/cysteine 430, cysteine 434/cysteine 457, cysteine 448/cysteine 454, cysteine 453/cysteine 479, cysteine 466/cysteine 486, cysteine 473/cysteine 505, cysteine 498/cysteine 510, cysteine 517/cysteine 567, cysteine 532/cysteine 576, cysteine 545/cysteine 555, cysteine 562/cysteine 602, and cysteine 596/cysteine 608. A D/ECD-tripeptide motif is present at residues 472-474 (DCD).

It belongs to the venom metalloproteinase (M12B) family. P-III subfamily. P-IIIa sub-subfamily. As to quaternary structure, monomer. Zn(2+) serves as cofactor. In terms of tissue distribution, expressed by the venom gland.

It localises to the secreted. In terms of biological role, snake venom zinc metalloprotease that may induce platelet aggregation. In Cerberus rynchops (Dog-faced water snake), this protein is Zinc metalloproteinase-disintegrin-like.